The primary structure comprises 540 residues: MAKQLLFEDHARARMLAGVEKLAKAVATTMGPTGRNVIIDKSFGGPTVTKDGVTVAKEIELEDRFENMGAKLVIEVAQKTSDLAGDGTTTATVLARAIFKEGLRNIVAGSNPTAIRRGIEKAVEAACDQLVEMGRPVSGKQEVAHVGAISANNDNVIGELLADALERVGKDGVITVEEGKSRNTEVEYVDGMQFDKGYVSPYFITDSSTMEASLEDALVLLYEKKVSNIRDLVPLLEKTAQTGQPLLIIAEDVDAEALTLLVVNKLRGTLNVCAVKAPGFGDRRKAMLGDIATLTGGTLISEDLGMQLENVTLEHLGRAKKVTVDKSNTTIVEGAGKREDIDKRVAQIRAQIEQTDSDYDKEKFQERLAKLAGGVAVISVGAETEAEMKQTKARLEDALHATRAAVEEGILPGGGVALVHCREAVEAAKKKAKGDEKIGVDIVLGALDAPMRQIADNGGIDGSVVVDEVLQKNDPKIGFNAHTGEYTDMVKAGVIDPVKVVRTALTNAASIAGLLLTTEALVTNFEQEDKDKRPVEGMVS.

Residues 29–32, lysine 50, 86–90, glycine 414, and aspartate 496 each bind ATP; these read TMGP and DGTTT.

Belongs to the chaperonin (HSP60) family. Forms a cylinder of 14 subunits composed of two heptameric rings stacked back-to-back. Interacts with the co-chaperonin GroES.

The protein resides in the cytoplasm. It carries out the reaction ATP + H2O + a folded polypeptide = ADP + phosphate + an unfolded polypeptide.. Its function is as follows. Together with its co-chaperonin GroES, plays an essential role in assisting protein folding. The GroEL-GroES system forms a nano-cage that allows encapsulation of the non-native substrate proteins and provides a physical environment optimized to promote and accelerate protein folding. The polypeptide is Chaperonin GroEL 2 (Rhodopirellula baltica (strain DSM 10527 / NCIMB 13988 / SH1)).